Reading from the N-terminus, the 212-residue chain is Redox-sensing transcriptional repressor Rex (212 aa).

Residues 17–56 (KYHRYLQELMENDVDRISSKELSEKIGFTASQIRQDLNCF) constitute a DNA-binding region (H-T-H motif). 91-96 (GAGNIG) provides a ligand contact to NAD(+).

The protein belongs to the transcriptional regulatory Rex family. In terms of assembly, homodimer.

The protein localises to the cytoplasm. Its function is as follows. Modulates transcription in response to changes in cellular NADH/NAD(+) redox state. In Clostridium perfringens (strain ATCC 13124 / DSM 756 / JCM 1290 / NCIMB 6125 / NCTC 8237 / Type A), this protein is Redox-sensing transcriptional repressor Rex.